We begin with the raw amino-acid sequence, 151 residues long: Minor curlin subunit (151 aa).

Residues 1-21 (MKNKLLFMMLTILGAPGIAAA) form the signal peptide.

This sequence belongs to the CsgA/CsgB family.

The protein resides in the fimbrium. In terms of biological role, curlin is the structural subunit of the curli. Curli are coiled surface structures that assemble preferentially at growth temperatures below 37 degrees Celsius. Curli can bind to fibronectin. The minor subunit is the nucleation component of curlin monomers. The sequence is that of Minor curlin subunit (csgB) from Escherichia coli O157:H7.